We begin with the raw amino-acid sequence, 175 residues long: ADP-ribosylation factor 6 (175 aa).

Gly-2 carries N-myristoyl glycine lipidation. A lipid anchor (N6-myristoyl lysine) is attached at Lys-3. GTP-binding positions include 23–28 (AAGKTT), 41–44 (TIPT), 63–67 (DVGGQ), 122–125 (NKQD), and 155–156 (CA).

Belongs to the small GTPase superfamily. Arf family. Interacts (when activated) with GGA1, GGA2 and GGA3; the interaction is required for proper subcellular location of GGA1, GGA2 and GGA3. Interacts with PIP5K1C. Interacts with USP6 (via Rab-GAP TBC domain). Interacts with RAB11FIP3 and RAB11FIP4. Interacts with HERC1. Interacts with ARHGAP21. Interacts with ASAP3; the interaction is stabilized by calcium ions. Interacts with NCS1/FREQ at the plasma membrane. Interacts with TBC1D24. Interacts with ECPAS. Interacts with MICALL1. Interacts with SPAG9 homodimers, forming heterotetramers. Interacts with CYTH3. Interacts with ASAP2. Interacts with UACA. Interacts with KIF23, forming heterodimers and heterotetramers. Interacts with C9orf72. Interacts (GTP-bound form) with TJAP1/PILT. Interacts with PRKAA2. Interacts with CD36 (when palmitoylated); this interaction mediates CD36 transport from the Golgi to the plasma membrane. Interacts with APBB1. In terms of assembly, (Microbial infection) Interacts with the V.cholerae enterotoxin subunit A1; this causes a conformation change so that the toxin can bind NAD and catalyze the ADP-ribosylation of Gs alpha. As to quaternary structure, (Microbial infection) Interacts with EspG from enteropathogenic E.coli. (Microbial infection) Identified in a complex with RAB1A and EspG from enteropathogenic E.coli. In terms of assembly, (Microbial infection) Interacts with human enterovirus 71 protein VP1. Post-translationally, GTP-bound form is myristoylated on Lys-3 by NMT1 and NMT2, allowing ARF6 to remain on membranes during the GTPase cycle, thereby promoting its activity. GDP-bound inactive form is demyristoylated on Lys-3 by SIRT2 at early endosomes or endocytic recycling compartment to allow its efficient activation by a guanine exchange factor (GEF) after GDP release. In terms of tissue distribution, ubiquitous, with higher levels in heart, substantia nigra, and kidney.

Its subcellular location is the cytoplasm. It localises to the cytosol. The protein resides in the cell membrane. The protein localises to the endosome membrane. It is found in the recycling endosome membrane. Its subcellular location is the cell projection. It localises to the filopodium membrane. The protein resides in the ruffle. The protein localises to the cleavage furrow. It is found in the midbody. Its subcellular location is the midbody ring. It localises to the early endosome membrane. The protein resides in the golgi apparatus. The protein localises to the trans-Golgi network membrane. It catalyses the reaction GTP + H2O = GDP + phosphate + H(+). Activation is generally mediated by a guanine exchange factor (GEF), while inactivation through hydrolysis of bound GTP is catalyzed by a GTPase activating protein (GAP). Activated by ASAP3. Inactivated by ACAP1 and ACAP2. Activated by NGF via NTRK1. Activated by PRKAA2 through its C-terminal regulatory domain. Functionally, GTP-binding protein involved in protein trafficking that regulates endocytic recycling and cytoskeleton remodeling. GTP-bound form plays an important role in the transport of multiple palmitoylated proteins form the Golgi to the plasma membrane. Required for normal completion of mitotic cytokinesis. Plays a role in the reorganization of the actin cytoskeleton and the formation of stress fibers. Involved in the regulation of dendritic spine development, contributing to the regulation of dendritic branching and filopodia extension. Potentiates the neurite outgrowth in primary neurons by interacting with the molecular adapter APBB1. Plays an important role in membrane trafficking, during junctional remodeling and epithelial polarization. Regulates surface levels of adherens junction proteins such as CDH1. Required for NTRK1 sorting to the recycling pathway from early endosomes. In terms of biological role, (Microbial infection) Functions as an allosteric activator of the cholera toxin catalytic subunit, an ADP-ribosyltransferase. (Microbial infection) Plays a key role in the endocytosis of enterovirus 71 and thus viral entry into brain microvascular endothelial cells. In Homo sapiens (Human), this protein is ADP-ribosylation factor 6.